The chain runs to 405 residues: Tyrosine--tRNA ligase (405 aa).

Tyr-35 provides a ligand contact to L-tyrosine. The 'HIGH' region motif lies at Ala-40–His-49. The L-tyrosine site is built by Tyr-166 and Gln-170. The short motif at Lys-226–Ser-230 is the 'KMSKS' region element. Lys-229 provides a ligand contact to ATP. One can recognise an S4 RNA-binding domain in the interval Ile-340 to Ile-405.

The protein belongs to the class-I aminoacyl-tRNA synthetase family. TyrS type 1 subfamily. In terms of assembly, homodimer.

It is found in the cytoplasm. It carries out the reaction tRNA(Tyr) + L-tyrosine + ATP = L-tyrosyl-tRNA(Tyr) + AMP + diphosphate + H(+). Functionally, catalyzes the attachment of tyrosine to tRNA(Tyr) in a two-step reaction: tyrosine is first activated by ATP to form Tyr-AMP and then transferred to the acceptor end of tRNA(Tyr). The chain is Tyrosine--tRNA ligase from Borreliella burgdorferi (strain ATCC 35210 / DSM 4680 / CIP 102532 / B31) (Borrelia burgdorferi).